The chain runs to 644 residues: Exoribonuclease 2 (644 aa).

Positions 189–516 constitute an RNB domain; sequence RQDLTALNFV…NHRLLKAVIK (328 aa). The region spanning 561-643 is the S1 motif domain; the sequence is NTRFAAEIID…ETRSIIARPA (83 aa).

This sequence belongs to the RNR ribonuclease family. RNase II subfamily.

It localises to the cytoplasm. The catalysed reaction is Exonucleolytic cleavage in the 3'- to 5'-direction to yield nucleoside 5'-phosphates.. In terms of biological role, involved in mRNA degradation. Hydrolyzes single-stranded polyribonucleotides processively in the 3' to 5' direction. The sequence is that of Exoribonuclease 2 from Salmonella newport (strain SL254).